The sequence spans 565 residues: Sensor histidine kinase MtrB (565 aa).

Residues 1-13 (MMWGSRRRTRSRW) show a composition bias toward basic residues. The interval 1-21 (MMWGSRRRTRSRWGRSGPMTR) is disordered. A run of 2 helical transmembrane segments spans residues 42–62 (VVAL…FVLT) and 213–233 (GTMI…ALLV). An HAMP domain is found at 235-287 (RQVVVPVRSASRIAERFAEGHLSERMPVRGEDDMARLAMSFNDMAESLSRQIT). Residues 302 to 519 (DVSHELRTPL…CFRLTLPLVR (218 aa)) form the Histidine kinase domain. Histidine 305 carries the post-translational modification Phosphohistidine; by autocatalysis. Residues 524 to 565 (TTSPLPMKPIPQPSPSGGQSPSTGPQHAKDRARQREHAERSL) form a disordered region. The segment covering 538 to 549 (PSGGQSPSTGPQ) has biased composition (low complexity). A compositionally biased stretch (basic and acidic residues) spans 550-565 (HAKDRARQREHAERSL).

The protein localises to the cell membrane. The enzyme catalyses ATP + protein L-histidine = ADP + protein N-phospho-L-histidine.. Functionally, member of the two-component regulatory system MtrA/MtrB. Seems to function as a membrane-associated protein kinase that phosphorylates MtrA in response to environmental signals. This Mycolicibacterium paratuberculosis (strain ATCC BAA-968 / K-10) (Mycobacterium paratuberculosis) protein is Sensor histidine kinase MtrB (mtrB).